The chain runs to 393 residues: Formate-dependent phosphoribosylglycinamide formyltransferase (393 aa).

N(1)-(5-phospho-beta-D-ribosyl)glycinamide contacts are provided by residues Glu15 to Leu16 and Glu75. Residues Arg107, Lys148, Ser153–Gln158, Glu188–Ile191, and Glu196 contribute to the ATP site. Residues Asn112 to Leu302 enclose the ATP-grasp domain. Mg(2+)-binding residues include Glu261 and Glu273. N(1)-(5-phospho-beta-D-ribosyl)glycinamide contacts are provided by residues Asp280, Lys350, and Arg357–Arg358.

This sequence belongs to the PurK/PurT family. In terms of assembly, homodimer.

The catalysed reaction is N(1)-(5-phospho-beta-D-ribosyl)glycinamide + formate + ATP = N(2)-formyl-N(1)-(5-phospho-beta-D-ribosyl)glycinamide + ADP + phosphate + H(+). It participates in purine metabolism; IMP biosynthesis via de novo pathway; N(2)-formyl-N(1)-(5-phospho-D-ribosyl)glycinamide from N(1)-(5-phospho-D-ribosyl)glycinamide (formate route): step 1/1. Functionally, involved in the de novo purine biosynthesis. Catalyzes the transfer of formate to 5-phospho-ribosyl-glycinamide (GAR), producing 5-phospho-ribosyl-N-formylglycinamide (FGAR). Formate is provided by PurU via hydrolysis of 10-formyl-tetrahydrofolate. The protein is Formate-dependent phosphoribosylglycinamide formyltransferase of Prochlorococcus marinus (strain SARG / CCMP1375 / SS120).